The sequence spans 1004 residues: Ovochymase-2 (1004 aa).

The signal sequence occupies residues 1 to 19 (MPTRNLLLGSILLSLAVKG). The propeptide at 20-45 (DPGPHRGARCGVSPLGSATELNYLSR) is activation peptide. Residues 46 to 295 (IVGGRESKKG…LLGWVSSQLN (250 aa)) enclose the Peptidase S1 1 domain. Cys71 and Cys87 are disulfide-bonded. His86 functions as the Charge relay system in the catalytic mechanism. Residue Glu113 participates in Ca(2+) binding. An N-linked (GlcNAc...) asparagine glycan is attached at Asn128. Asp136 functions as the Charge relay system in the catalytic mechanism. Intrachain disulfides connect Cys170–Cys240, Cys201–Cys219, and Cys230–Cys259. Ser234 acts as the Charge relay system in catalysis. CUB domains lie at 309–419 (QDGV…YSAV) and 429–541 (CGSF…FTFV). N-linked (GlcNAc...) asparagine glycosylation occurs at Asn351. Residues Cys363 and Cys382 are joined by a disulfide bond. Residue Asn408 is glycosylated (N-linked (GlcNAc...) asparagine). Cystine bridges form between Cys429-Cys456 and Cys483-Cys504. Positions 547-558 (VEDSRQGNMPST) are enriched in polar residues. Positions 547 to 566 (VEDSRQGNMPSTNKKETTAQ) are disordered. In terms of domain architecture, Peptidase S1 2 spans 580–820 (IYNSIAKVEE…FIDWIRQIMS (241 aa)). The propeptide at 584 to 1004 (IAKVEEAVPH…VVPDSDSSEP (421 aa)) is activation peptide. Cystine bridges form between Cys609-Cys625, Cys706-Cys776, Cys737-Cys754, and Cys766-Cys796. N-linked (GlcNAc...) asparagine glycosylation is present at Asn763. Asn940 is a glycosylation site (N-linked (GlcNAc...) asparagine).

The protein belongs to the peptidase S1 family. Post-translationally, the catalytically inactive 110 kDa form is processed both N- and C-terminally to give rise to the 66 kDa catalytically active form. In terms of tissue distribution, specifically expressed in the pars recta oviduct.

Its subcellular location is the secreted. The catalysed reaction is Preferential cleavage at 371-Gly-Ser-Arg-|-Trp-374 of glycoprotein gp43 in Xenopus laevis coelemic egg envelope to yield gp41.. Functionally, converts the glycoprotein envelope surrounding the egg from an unfertilizable to a fertilizable form during its transit through the pars recta portion of the oviduct by selectively hydrolyzing the envelope glycoprotein gp43. The egg envelope is converted to a sperm-penetrable form, via an increase in sperm binding. The chain is Ovochymase-2 (ovch2) from Xenopus laevis (African clawed frog).